Consider the following 247-residue polypeptide: Oil body-associated protein 2A (247 aa).

The interval 1 to 26 (MASSDERPGAYPARDGSENLPPGDPK) is disordered.

This sequence belongs to the OBAP family.

This is Oil body-associated protein 2A from Arabidopsis thaliana (Mouse-ear cress).